Reading from the N-terminus, the 497-residue chain is Guanosine-5'-triphosphate,3'-diphosphate pyrophosphatase (497 aa).

It belongs to the GppA/Ppx family. GppA subfamily.

The enzyme catalyses guanosine 3'-diphosphate 5'-triphosphate + H2O = guanosine 3',5'-bis(diphosphate) + phosphate + H(+). It participates in purine metabolism; ppGpp biosynthesis; ppGpp from GTP: step 2/2. Functionally, catalyzes the conversion of pppGpp to ppGpp. Guanosine pentaphosphate (pppGpp) is a cytoplasmic signaling molecule which together with ppGpp controls the 'stringent response', an adaptive process that allows bacteria to respond to amino acid starvation, resulting in the coordinated regulation of numerous cellular activities. In Pseudoalteromonas translucida (strain TAC 125), this protein is Guanosine-5'-triphosphate,3'-diphosphate pyrophosphatase.